A 262-amino-acid chain; its full sequence is ATP synthase subunit a (262 aa).

Transmembrane regions (helical) follow at residues 32-52, 98-118, 127-147, 153-173, 189-209, and 219-239; these read IAFTNSAAWMALTTVLLAVFV, LFMFILFGNLLGLLPLGVLGI, FTITGVLAIISFSIVLIVGFW, FFSLFVPSGTPLPMIPIIFPI, LFVAMMAGHVLLKVLSSFVID, and LLVGAPSFILMIGISALEILV.

Belongs to the ATPase A chain family. F-type ATPases have 2 components, CF(1) - the catalytic core - and CF(0) - the membrane proton channel. CF(1) has five subunits: alpha(3), beta(3), gamma(1), delta(1), epsilon(1). CF(0) has four main subunits: a, b, b' and c.

It localises to the cell inner membrane. Key component of the proton channel; it plays a direct role in the translocation of protons across the membrane. This Erythrobacter litoralis (strain HTCC2594) protein is ATP synthase subunit a.